We begin with the raw amino-acid sequence, 1436 residues long: MEPADLSNLRGRSLRASIRGSMRGSIRENSNSIWRNNGAEVFSRSARDEDDEEALKWAALEKLPTYDRLRKGILFGSQGAAAEVDVDDSGVLERKNLLERLVKVADEDNEKFLLKLKNRIDRVGIDFPSIEVRFEHLNIDADAYVGSRALPTFTNFISNFVEGLLDSIHILPSKKRQVTILKDVSGIVKPCRMTLLLGPPGSGKTTLLLALAGKLDSALKVTGKVTYNGHELHEFVPQRTAAYISQHDLHIGEMTVRETLEFSARCQGVGSRYEMLAELSRREKAANIKPDADIDMFMKAASTEGQEAKVVTDYILKILGLDICADTMVGDQMIRGISGGQKKRVTTGEMIVGPSKALFMDEISTGLDSSTTYSIVNSLKQSVRIMKGTALISLLQPAPETYNLFDDIILLSDGYIVYEGPREEVLEFFESMGFKCPERKGAADFLQEVTSKKDQQQYWIRRDEPYRFITSKEFAEAYQSFHVGRKVSDELKTTFDKSKSHPAALTTQKYGIGKRQLLKVCTERELLLMQRNSFVYLFKFFQLLIIALMTMTIFFRTKMPRDSAEDGGIYSGALFFVVIMIMFNGLSELPMTLYKLPVFYKQRDFLFYPSWAYAIPSWILKIPVTFAEVGMWVFLTYYVMGFDPNVGRFFKQFLLLLLVNQMASALFRFIAAVGRTMGVASTFGAFALLLQFALGGFILARNDVKDWWIWGYWTSPLMYSVNAILVNEFDGQKWKHIVAGGTEPLGAAVVRARGFFPDAYWYWIGVGALAGFIVMFNIAYSVALAYLNPFDKPQATISDESENNESESSPQITSTQEGDSASENKKKGMVLPFDPHSITFDEVVYSVDMPPEMRESGTSDNRLVLLKSVSGAFRPGVLTALMGVSGAGKTTLMDVLAGRKTGGYIDGSIKISGYPKKQDTFARISGYCEQNDIHSPYVTVFESLVYSAWLRLPQDVNEEKRMMFVEEVMDLVELTPLRSALVGLPGVNGLSTEQRKRLTIAVELVANPSIIFMDEPTSGLDARAAAIVMRAVRNTVDTGRTVVCTIHQPSIDIFEAFDELFLMKRGGQEIYVGPLGRQSCHLIKYFESIPGVSKIVEGYNPATWMLEVTASSQEMALGVDFTDLYKKSDLYRRNKALIDELSVPRPGTSDLHFDSEFSQPFWTQCMACLWKQHWSYWRNPAYTAVRLIFTTFIALIFGTMFWDIGTKVSRNQDLVNAMGSMYAAVLFLGVQNSSSVQPVVSVERTVFYREKAAGMYSAIPYAFAQVLIEIPYIFVQATVYGLIVYSMIGFEWTVAKFFWDFFFMFFTFLYFTFFGMMTVAVTPNQNVASIVAGFFYTVWNLFSGFIVPRPRIPIWWRWYYWGCPIAWTLYGLVASQFGDLQDPLTDQNQTVEQFLRSNFGFKHDFLGVVAAVIVAFAVVFAFTFALGIKAFNFQRR.

Residues 165–438 (LDSIHILPSK…FESMGFKCPE (274 aa)) form the ABC transporter 1 domain. Residue 198 to 205 (GPPGSGKT) coordinates ATP. In terms of domain architecture, ABC transmembrane type-2 1 spans 516–729 (QLLKVCTERE…SVNAILVNEF (214 aa)). A run of 7 helical transmembrane segments spans residues 534 to 554 (FVYLFKFFQLLIIALMTMTIF), 567 to 587 (GGIYSGALFFVVIMIMFNGLS), 622 to 642 (IPVTFAEVGMWVFLTYYVMGF), 653 to 673 (FLLLLLVNQMASALFRFIAAV), 679 to 699 (VASTFGAFALLLQFALGGFIL), 707 to 727 (WWIWGYWTSPLMYSVNAILVN), and 764 to 784 (IGVGALAGFIVMFNIAYSVAL). Residues 796–826 (TISDESENNESESSPQITSTQEGDSASENKK) form a disordered region. A compositionally biased stretch (polar residues) spans 810-821 (PQITSTQEGDSA). Residues 838–1090 (ITFDEVVYSV…HLIKYFESIP (253 aa)) enclose the ABC transporter 2 domain. 883-890 (GVSGAGKT) contributes to the ATP binding site. In terms of domain architecture, ABC transmembrane type-2 2 spans 1163 to 1377 (TQCMACLWKQ…TLYGLVASQF (215 aa)). 7 helical membrane-spanning segments follow: residues 1184–1204 (AVRLIFTTFIALIFGTMFWDI), 1214–1234 (LVNAMGSMYAAVLFLGVQNSS), 1270–1290 (IPYIFVQATVYGLIVYSMIGF), 1301–1321 (FFFMFFTFLYFTFFGMMTVAV), 1327–1347 (VASIVAGFFYTVWNLFSGFIV), 1358–1378 (WYYWGCPIAWTLYGLVASQFG), and 1408–1428 (VVAAVIVAFAVVFAFTFALGI).

The protein belongs to the ABC transporter superfamily. ABCG family. PDR (TC 3.A.1.205) subfamily. Roots, petals and leaf epidermis, where it is confined to glandular trichomes (at protein level).

The protein localises to the cell membrane. Functionally, excretes secondary metabolites such as terpenes. Involved in both constitutive and jasmonic acid-dependent induced defense. Confers some resistance to sclareol and B.cinerea. In Nicotiana plumbaginifolia (Leadwort-leaved tobacco), this protein is Pleiotropic drug resistance protein 1 (PDR1).